Consider the following 288-residue polypeptide: Type II restriction enzyme DpnII (288 aa).

The protein belongs to the DpnII type II restriction endonuclease family. In terms of assembly, homodimer.

The enzyme catalyses Endonucleolytic cleavage of DNA to give specific double-stranded fragments with terminal 5'-phosphates.. A P subtype restriction enzyme that recognizes the double-stranded unmethylated sequence 5'-GATC-3' and cleaves before G-1. This chain is Type II restriction enzyme DpnII, found in Streptococcus pneumoniae.